The primary structure comprises 243 residues: Small ribosomal subunit protein uS2 (243 aa).

This sequence belongs to the universal ribosomal protein uS2 family.

The polypeptide is Small ribosomal subunit protein uS2 (Aliivibrio salmonicida (strain LFI1238) (Vibrio salmonicida (strain LFI1238))).